The primary structure comprises 116 residues: Tachykinin-3 (116 aa).

The first 20 residues, 1–20 (MRSAMLFAAVLALSLAWTFG), serve as a signal peptide directing secretion. Positions 21-79 (AVCEEPQGQGGRLSKDSDLYQLPPSLLRRLYDSRPVSLEGLLKVLSKASVGPKETSLPQ) are excised as a propeptide. Position 91 is a methionine amide (Met91). Positions 93–116 (KRNSQPDTPTDVVEENTPSFGILK) are disordered. A propeptide spanning residues 95–116 (NSQPDTPTDVVEENTPSFGILK) is cleaved from the precursor.

This sequence belongs to the tachykinin family.

Its subcellular location is the secreted. Functionally, tachykinins are active peptides which excite neurons, evoke behavioral responses, are potent vasodilators and secretagogues, and contract (directly or indirectly) many smooth muscles. Is a critical central regulator of gonadal function. This is Tachykinin-3 (Tac3) from Mus musculus (Mouse).